We begin with the raw amino-acid sequence, 181 residues long: UPF0302 protein LMOf2365_1950 (181 aa).

This sequence belongs to the UPF0302 family.

This is UPF0302 protein LMOf2365_1950 from Listeria monocytogenes serotype 4b (strain F2365).